The following is a 351-amino-acid chain: Hydroxymethylglutaryl-CoA synthase (351 aa).

Residue aspartate 30 participates in (3S)-3-hydroxy-3-methylglutaryl-CoA binding. Residue glutamate 82 is the Proton donor/acceptor of the active site. Positions 114, 155, 203, and 236 each coordinate (3S)-3-hydroxy-3-methylglutaryl-CoA. The Acyl-thioester intermediate role is filled by cysteine 114. Histidine 236 serves as the catalytic Proton donor/acceptor. Arginine 241 is a CoA binding site. (3S)-3-hydroxy-3-methylglutaryl-CoA-binding residues include arginine 245, asparagine 268, and serine 298.

The protein belongs to the thiolase-like superfamily. Archaeal HMG-CoA synthase family. In terms of assembly, interacts with acetoacetyl-CoA thiolase that catalyzes the precedent step in the pathway and with a DUF35 protein. The acetoacetyl-CoA thiolase/HMG-CoA synthase complex channels the intermediate via a fused CoA-binding site, which allows for efficient coupling of the endergonic thiolase reaction with the exergonic HMGCS reaction.

It catalyses the reaction acetoacetyl-CoA + acetyl-CoA + H2O = (3S)-3-hydroxy-3-methylglutaryl-CoA + CoA + H(+). Its pathway is metabolic intermediate biosynthesis; (R)-mevalonate biosynthesis; (R)-mevalonate from acetyl-CoA: step 2/3. Its function is as follows. Catalyzes the condensation of acetyl-CoA with acetoacetyl-CoA to form 3-hydroxy-3-methylglutaryl-CoA (HMG-CoA). Functions in the mevalonate (MVA) pathway leading to isopentenyl diphosphate (IPP), a key precursor for the biosynthesis of isoprenoid compounds that are building blocks of archaeal membrane lipids. The protein is Hydroxymethylglutaryl-CoA synthase of Pyrobaculum neutrophilum (strain DSM 2338 / JCM 9278 / NBRC 100436 / V24Sta) (Thermoproteus neutrophilus).